The primary structure comprises 546 residues: Probable protein kinase UbiB (546 aa).

One can recognise a Protein kinase domain in the interval aspartate 124–phenylalanine 502. ATP-binding positions include leucine 130–valine 138 and lysine 153. Aspartate 288 functions as the Proton acceptor in the catalytic mechanism. 2 helical membrane-spanning segments follow: residues tyrosine 501 to proline 521 and glutamate 522 to tryptophan 542.

It belongs to the ABC1 family. UbiB subfamily.

The protein resides in the cell inner membrane. Its pathway is cofactor biosynthesis; ubiquinone biosynthesis [regulation]. Its function is as follows. Is probably a protein kinase regulator of UbiI activity which is involved in aerobic coenzyme Q (ubiquinone) biosynthesis. The polypeptide is Probable protein kinase UbiB (Shigella sonnei (strain Ss046)).